The following is a 185-amino-acid chain: Ribosome-recycling factor (185 aa).

An N6-acetyllysine modification is found at K162.

Belongs to the RRF family.

The protein resides in the cytoplasm. Its function is as follows. Responsible for the release of ribosomes from messenger RNA at the termination of protein biosynthesis. May increase the efficiency of translation by recycling ribosomes from one round of translation to another. The chain is Ribosome-recycling factor from Shigella boydii serotype 18 (strain CDC 3083-94 / BS512).